The primary structure comprises 226 residues: EEF1A lysine methyltransferase 3 (226 aa).

Residues tryptophan 57, 83–85 (GAG), aspartate 104, tryptophan 133, and alanine 150 each bind S-adenosyl-L-methionine.

This sequence belongs to the methyltransferase superfamily. METTL21 family. In terms of assembly, interacts with members of the heat shock protein 70 and 90 families and of the TCP-1 chaperonin family, as well as with HSPD1, STIP1 and tubulin; at least some of these proteins may be methylation substrates.

Its subcellular location is the cytoplasm. It is found in the cytoskeleton. The protein localises to the microtubule organizing center. The protein resides in the centrosome. It carries out the reaction L-lysyl-[protein] + 3 S-adenosyl-L-methionine = N(6),N(6),N(6)-trimethyl-L-lysyl-[protein] + 3 S-adenosyl-L-homocysteine + 3 H(+). It catalyses the reaction L-lysyl-[protein] + S-adenosyl-L-methionine = N(6)-methyl-L-lysyl-[protein] + S-adenosyl-L-homocysteine + H(+). The catalysed reaction is N(6)-methyl-L-lysyl-[protein] + S-adenosyl-L-methionine = N(6),N(6)-dimethyl-L-lysyl-[protein] + S-adenosyl-L-homocysteine + H(+). The enzyme catalyses N(6),N(6)-dimethyl-L-lysyl-[protein] + S-adenosyl-L-methionine = N(6),N(6),N(6)-trimethyl-L-lysyl-[protein] + S-adenosyl-L-homocysteine + H(+). In terms of biological role, protein-lysine methyltransferase that selectively mono-, di- and trimethylates 'Lys-165' of the translation elongation factors EEF1A1 and EEF1A2 in an aminoacyl-tRNA and GTP-dependent manner. EEF1A1 methylation by EEF1AKMT3 is dynamic as well as inducible by stress conditions, such as ER-stress, and plays a regulatory role on mRNA translation. The protein is EEF1A lysine methyltransferase 3 of Bos taurus (Bovine).